The chain runs to 85 residues: Large ribosomal subunit protein bL27 (85 aa).

A disordered region spans residues 1–20 (MATKKAGGSTRNGRDSEAKR).

Belongs to the bacterial ribosomal protein bL27 family.

The protein is Large ribosomal subunit protein bL27 of Histophilus somni (strain 129Pt) (Haemophilus somnus).